The primary structure comprises 147 residues: uncharacterized protein (147 aa).

The HTH LytTR-type domain occupies 44 to 147; sequence LVGYIDKEIH…LKSIKERLSI (104 aa).

It is found in the cytoplasm. This is an uncharacterized protein from Staphylococcus aureus (strain MRSA252).